The primary structure comprises 139 residues: Endoribonuclease YbeY (139 aa).

Positions 110, 114, and 120 each coordinate Zn(2+).

It belongs to the endoribonuclease YbeY family. Requires Zn(2+) as cofactor.

It is found in the cytoplasm. In terms of biological role, single strand-specific metallo-endoribonuclease involved in late-stage 70S ribosome quality control and in maturation of the 3' terminus of the 16S rRNA. The chain is Endoribonuclease YbeY from Thermus thermophilus (strain ATCC BAA-163 / DSM 7039 / HB27).